The sequence spans 103 residues: Small ribosomal subunit protein uS10 (103 aa).

It belongs to the universal ribosomal protein uS10 family. In terms of assembly, part of the 30S ribosomal subunit.

Functionally, involved in the binding of tRNA to the ribosomes. The polypeptide is Small ribosomal subunit protein uS10 (Stenotrophomonas maltophilia (strain R551-3)).